Reading from the N-terminus, the 297-residue chain is Ribosomal RNA small subunit methyltransferase H (297 aa).

S-adenosyl-L-methionine is bound by residues 34-36 (GGH), aspartate 54, phenylalanine 81, aspartate 99, and glutamine 106.

The protein belongs to the methyltransferase superfamily. RsmH family.

The protein localises to the cytoplasm. The catalysed reaction is cytidine(1402) in 16S rRNA + S-adenosyl-L-methionine = N(4)-methylcytidine(1402) in 16S rRNA + S-adenosyl-L-homocysteine + H(+). Its function is as follows. Specifically methylates the N4 position of cytidine in position 1402 (C1402) of 16S rRNA. The sequence is that of Ribosomal RNA small subunit methyltransferase H from Chlamydia pneumoniae (Chlamydophila pneumoniae).